The following is a 486-amino-acid chain: Glutamyl-tRNA(Gln) amidotransferase subunit A (486 aa).

Active-site charge relay system residues include K74 and S149. The active-site Acyl-ester intermediate is the S173.

The protein belongs to the amidase family. GatA subfamily. In terms of assembly, heterotrimer of A, B and C subunits.

The catalysed reaction is L-glutamyl-tRNA(Gln) + L-glutamine + ATP + H2O = L-glutaminyl-tRNA(Gln) + L-glutamate + ADP + phosphate + H(+). Functionally, allows the formation of correctly charged Gln-tRNA(Gln) through the transamidation of misacylated Glu-tRNA(Gln) in organisms which lack glutaminyl-tRNA synthetase. The reaction takes place in the presence of glutamine and ATP through an activated gamma-phospho-Glu-tRNA(Gln). This Prochlorococcus marinus (strain MIT 9313) protein is Glutamyl-tRNA(Gln) amidotransferase subunit A.